The following is an 89-amino-acid chain: Small ribosomal subunit protein uS15 (89 aa).

It belongs to the universal ribosomal protein uS15 family. Part of the 30S ribosomal subunit. Forms a bridge to the 50S subunit in the 70S ribosome, contacting the 23S rRNA.

One of the primary rRNA binding proteins, it binds directly to 16S rRNA where it helps nucleate assembly of the platform of the 30S subunit by binding and bridging several RNA helices of the 16S rRNA. In terms of biological role, forms an intersubunit bridge (bridge B4) with the 23S rRNA of the 50S subunit in the ribosome. This is Small ribosomal subunit protein uS15 from Pseudomonas savastanoi pv. phaseolicola (strain 1448A / Race 6) (Pseudomonas syringae pv. phaseolicola (strain 1448A / Race 6)).